The primary structure comprises 1095 residues: Putative disease resistance protein At4g11170 (1095 aa).

The TIR domain occupies 9 to 173 (WRYDVFPSFR…TISKDVLEKL (165 aa)). Residue E84 is part of the active site. The 287-residue stretch at 168-454 (DVLEKLNATP…HENYLKQMII (287 aa)) folds into the NB-ARC domain. 6 LRR repeats span residues 609-631 (CLVELNMSHSKLKKLWSGVQPLR), 632-654 (NLRTMNLNSSRNLEILPNLMEAT), 655-677 (KLNRLDLGWCESLVELPSSIKNL), 679-701 (HLILLEMSCCKKLEIIPTNINLP), 702-722 (SLEVLHFRYCTRLQTFPEIST), and 723-744 (NIRLLNLIGTAITEVPPSVKYW).

It catalyses the reaction NAD(+) + H2O = ADP-D-ribose + nicotinamide + H(+). In Arabidopsis thaliana (Mouse-ear cress), this protein is Putative disease resistance protein At4g11170.